A 143-amino-acid chain; its full sequence is D-aminoacyl-tRNA deacylase (143 aa).

The short motif at 135-136 (GP) is the Gly-cisPro motif, important for rejection of L-amino acids element.

It belongs to the DTD family. As to quaternary structure, homodimer.

The protein resides in the cytoplasm. It carries out the reaction glycyl-tRNA(Ala) + H2O = tRNA(Ala) + glycine + H(+). The catalysed reaction is a D-aminoacyl-tRNA + H2O = a tRNA + a D-alpha-amino acid + H(+). Functionally, an aminoacyl-tRNA editing enzyme that deacylates mischarged D-aminoacyl-tRNAs. Also deacylates mischarged glycyl-tRNA(Ala), protecting cells against glycine mischarging by AlaRS. Acts via tRNA-based rather than protein-based catalysis; rejects L-amino acids rather than detecting D-amino acids in the active site. By recycling D-aminoacyl-tRNA to D-amino acids and free tRNA molecules, this enzyme counteracts the toxicity associated with the formation of D-aminoacyl-tRNA entities in vivo and helps enforce protein L-homochirality. The sequence is that of D-aminoacyl-tRNA deacylase from Mycobacterium bovis (strain ATCC BAA-935 / AF2122/97).